A 242-amino-acid chain; its full sequence is tRNA pseudouridine synthase A (242 aa).

The active-site Nucleophile is the Asp-51. Residue Tyr-107 coordinates substrate.

It belongs to the tRNA pseudouridine synthase TruA family. As to quaternary structure, homodimer.

The catalysed reaction is uridine(38/39/40) in tRNA = pseudouridine(38/39/40) in tRNA. In terms of biological role, formation of pseudouridine at positions 38, 39 and 40 in the anticodon stem and loop of transfer RNAs. The chain is tRNA pseudouridine synthase A from Helicobacter acinonychis (strain Sheeba).